A 570-amino-acid chain; its full sequence is Urease subunit alpha (570 aa).

A Urease domain is found at 131–570 (GGMDSHIHFI…LPMAQRYFLF (440 aa)). Ni(2+) contacts are provided by His-136, His-138, and Lys-219. At Lys-219 the chain carries N6-carboxylysine. His-221 is a binding site for substrate. Positions 248 and 274 each coordinate Ni(2+). Residue His-322 is the Proton donor of the active site. Residue Asp-362 participates in Ni(2+) binding.

This sequence belongs to the metallo-dependent hydrolases superfamily. Urease alpha subunit family. Heterotrimer of UreA (gamma), UreB (beta) and UreC (alpha) subunits. Three heterotrimers associate to form the active enzyme. It depends on Ni cation as a cofactor. Post-translationally, carboxylation allows a single lysine to coordinate two nickel ions.

The protein resides in the cytoplasm. The enzyme catalyses urea + 2 H2O + H(+) = hydrogencarbonate + 2 NH4(+). It participates in nitrogen metabolism; urea degradation; CO(2) and NH(3) from urea (urease route): step 1/1. This chain is Urease subunit alpha, found in Sinorhizobium medicae (strain WSM419) (Ensifer medicae).